A 330-amino-acid polypeptide reads, in one-letter code: uncharacterized protein (330 aa).

In terms of domain architecture, ABC transporter spans 4 to 242; the sequence is LSIQNLVVEY…AGEVLFEQST (239 aa). ATP is bound at residue 40 to 47; sequence GPSGCGKT. 210–330 lines the a nucleoside 3',5'-cyclic phosphate pocket; the sequence is DRVVELTPDF…LIEHRALAND (121 aa).

It belongs to the ABC transporter superfamily. As to quaternary structure, the complex is composed of two ATP-binding proteins (MT0079), two transmembrane proteins (MT0078) and a solute-binding protein.

Probably part of an ABC transporter complex. Probably responsible for energy coupling to the transport system. This is an uncharacterized protein from Mycobacterium tuberculosis (strain CDC 1551 / Oshkosh).